Reading from the N-terminus, the 284-residue chain is Tropomyosin (284 aa).

Residues Met1–Asn284 adopt a coiled-coil conformation.

This sequence belongs to the tropomyosin family. In terms of assembly, homodimer.

Functionally, tropomyosin, in association with the troponin complex, plays a central role in the calcium dependent regulation of muscle contraction. This chain is Tropomyosin, found in Blattella germanica (German cockroach).